Here is a 360-residue protein sequence, read N- to C-terminus: UDP-N-acetylglucosamine--N-acetylmuramyl-(pentapeptide) pyrophosphoryl-undecaprenol N-acetylglucosamine transferase (360 aa).

UDP-N-acetyl-alpha-D-glucosamine is bound by residues 13 to 15 (TGG), R164, S192, and Q293.

This sequence belongs to the glycosyltransferase 28 family. MurG subfamily.

The protein resides in the cell inner membrane. It catalyses the reaction di-trans,octa-cis-undecaprenyl diphospho-N-acetyl-alpha-D-muramoyl-L-alanyl-D-glutamyl-meso-2,6-diaminopimeloyl-D-alanyl-D-alanine + UDP-N-acetyl-alpha-D-glucosamine = di-trans,octa-cis-undecaprenyl diphospho-[N-acetyl-alpha-D-glucosaminyl-(1-&gt;4)]-N-acetyl-alpha-D-muramoyl-L-alanyl-D-glutamyl-meso-2,6-diaminopimeloyl-D-alanyl-D-alanine + UDP + H(+). Its pathway is cell wall biogenesis; peptidoglycan biosynthesis. Functionally, cell wall formation. Catalyzes the transfer of a GlcNAc subunit on undecaprenyl-pyrophosphoryl-MurNAc-pentapeptide (lipid intermediate I) to form undecaprenyl-pyrophosphoryl-MurNAc-(pentapeptide)GlcNAc (lipid intermediate II). In Chromobacterium violaceum (strain ATCC 12472 / DSM 30191 / JCM 1249 / CCUG 213 / NBRC 12614 / NCIMB 9131 / NCTC 9757 / MK), this protein is UDP-N-acetylglucosamine--N-acetylmuramyl-(pentapeptide) pyrophosphoryl-undecaprenol N-acetylglucosamine transferase.